The sequence spans 280 residues: F-actin-capping protein subunit alpha (280 aa).

This sequence belongs to the F-actin-capping protein alpha subunit family. As to quaternary structure, heterodimer of an alpha and a beta subunit.

It is found in the cytoplasm. Its subcellular location is the cytoskeleton. Its function is as follows. F-actin-capping proteins bind in a Ca(2+)-independent manner to the fast growing ends of actin filaments (barbed end) thereby blocking the exchange of subunits at these ends. Unlike other capping proteins (such as gelsolin and severin), these proteins do not sever actin filaments. The sequence is that of F-actin-capping protein subunit alpha (CAP01) from Candida albicans (strain SC5314 / ATCC MYA-2876) (Yeast).